Consider the following 1136-residue polypeptide: Protein stu-1 (1136 aa).

HEAT repeat units follow at residues 95-133 (TLPV…ERSV) and 167-205 (YVPT…KSDL). Disordered regions lie at residues 524-554 (KDPH…MGAP), 567-794 (RAMA…QPQI), and 821-884 (TAGQ…LLDS). Residues 595–622 (VSSTSQASVASASTASAVPAPTKSAFGA) show a composition bias toward low complexity. Pro residues predominate over residues 659 to 668 (PAEPASPPSK). Over residues 673 to 683 (TVTSPKTQTLV) the composition is skewed to polar residues. A compositionally biased stretch (low complexity) spans 701–716 (SSESGIPIPVSGISSP). Polar residues-rich tracts occupy residues 777-793 (LPTQ…QQPQ) and 822-833 (AGQTQPQSTYTS).

Belongs to the CLASP family. Interacts with microtubules.

It is found in the nucleus. The protein resides in the cytoplasm. The protein localises to the cytoskeleton. Its subcellular location is the spindle. Functionally, microtubule binding protein that promotes the stabilization of dynamic microtubules. Required for mitotic spindle formation. The chain is Protein stu-1 (stu-1) from Neurospora crassa (strain ATCC 24698 / 74-OR23-1A / CBS 708.71 / DSM 1257 / FGSC 987).